A 206-amino-acid chain; its full sequence is Protein GrpE (206 aa).

Residues 1–18 (MNNEDKKLQDEQLQKETV) show a composition bias toward basic and acidic residues. The interval 1–21 (MNNEDKKLQDEQLQKETVEAA) is disordered.

It belongs to the GrpE family. In terms of assembly, homodimer.

The protein resides in the cytoplasm. Participates actively in the response to hyperosmotic and heat shock by preventing the aggregation of stress-denatured proteins, in association with DnaK and GrpE. It is the nucleotide exchange factor for DnaK and may function as a thermosensor. Unfolded proteins bind initially to DnaJ; upon interaction with the DnaJ-bound protein, DnaK hydrolyzes its bound ATP, resulting in the formation of a stable complex. GrpE releases ADP from DnaK; ATP binding to DnaK triggers the release of the substrate protein, thus completing the reaction cycle. Several rounds of ATP-dependent interactions between DnaJ, DnaK and GrpE are required for fully efficient folding. This chain is Protein GrpE, found in Photobacterium profundum (strain SS9).